The following is a 397-amino-acid chain: Phosphoglycerate kinase (397 aa).

Substrate-binding positions include 21–23, arginine 37, 60–63, arginine 119, and arginine 152; these read DFN and HLGR. ATP-binding positions include lysine 203, glycine 294, glutamate 325, and 354-357; that span reads GGDS.

The protein belongs to the phosphoglycerate kinase family. Monomer.

The protein resides in the cytoplasm. The enzyme catalyses (2R)-3-phosphoglycerate + ATP = (2R)-3-phospho-glyceroyl phosphate + ADP. It functions in the pathway carbohydrate degradation; glycolysis; pyruvate from D-glyceraldehyde 3-phosphate: step 2/5. In Chlorobium phaeobacteroides (strain BS1), this protein is Phosphoglycerate kinase.